The primary structure comprises 185 residues: Elongation factor P (185 aa).

Belongs to the elongation factor P family.

The protein localises to the cytoplasm. It functions in the pathway protein biosynthesis; polypeptide chain elongation. Involved in peptide bond synthesis. Stimulates efficient translation and peptide-bond synthesis on native or reconstituted 70S ribosomes in vitro. Probably functions indirectly by altering the affinity of the ribosome for aminoacyl-tRNA, thus increasing their reactivity as acceptors for peptidyl transferase. This chain is Elongation factor P, found in Streptococcus equi subsp. zooepidemicus (strain MGCS10565).